The chain runs to 107 residues: SH3 domain-binding glutamic acid-rich-like protein 2 (107 aa).

The SH3-binding signature appears at 61–67 (QGNPLPP).

The protein belongs to the SH3BGR family.

The protein localises to the nucleus. This Bos taurus (Bovine) protein is SH3 domain-binding glutamic acid-rich-like protein 2 (SH3BGRL2).